We begin with the raw amino-acid sequence, 116 residues long: Large ribosomal subunit protein bL19 (116 aa).

The protein belongs to the bacterial ribosomal protein bL19 family.

This protein is located at the 30S-50S ribosomal subunit interface and may play a role in the structure and function of the aminoacyl-tRNA binding site. The polypeptide is Large ribosomal subunit protein bL19 (Mycoplasmopsis agalactiae (strain NCTC 10123 / CIP 59.7 / PG2) (Mycoplasma agalactiae)).